The primary structure comprises 422 residues: Aliphatic (R)-hydroxynitrile lyase (422 aa).

Positions 63, 85, 115, 118, 121, 129, and 199 each coordinate Zn(2+).

Belongs to the zinc-containing alcohol dehydrogenase family. In terms of assembly, homodimer. Zn(2+) is required as a cofactor.

It carries out the reaction (2R)-2-hydroxy-2-methylbutanenitrile = butan-2-one + hydrogen cyanide. Involved in the catabolism of cyanogenic glycosides. Naturally occurring substrates are the aliphatic acetone cyanohydrin and butan-2-one cyanohydrin, which are the aglycones of the cyanogenic glycosides linamarin, lotaustralin, linustatin and neolinustatin. Can use various aliphatic ketones and aldehydes as substrates, but not aromatic ketones. This chain is Aliphatic (R)-hydroxynitrile lyase, found in Linum usitatissimum (Flax).